The following is a 402-amino-acid chain: S-adenosylmethionine synthase (402 aa).

137–142 (GQGSAD) lines the ATP pocket.

Belongs to the AdoMet synthase 2 family. Mg(2+) is required as a cofactor.

The catalysed reaction is L-methionine + ATP + H2O = S-adenosyl-L-methionine + phosphate + diphosphate. Its pathway is amino-acid biosynthesis; S-adenosyl-L-methionine biosynthesis; S-adenosyl-L-methionine from L-methionine: step 1/1. In terms of biological role, catalyzes the formation of S-adenosylmethionine from methionine and ATP. The polypeptide is S-adenosylmethionine synthase (Pyrobaculum calidifontis (strain DSM 21063 / JCM 11548 / VA1)).